Reading from the N-terminus, the 93-residue chain is U12-lycotoxin-Ls1c (93 aa).

Residues 1-18 (MKFAVILLFSLVVLAVAS) form the signal peptide. Positions 19–38 (ESVEEVRREIDIEDLPEQQR) are excised as a propeptide.

Belongs to the neurotoxin 31 family. Contains 5 disulfide bonds. Expressed by the venom gland.

It is found in the secreted. This chain is U12-lycotoxin-Ls1c, found in Lycosa singoriensis (Wolf spider).